Here is a 199-residue protein sequence, read N- to C-terminus: Large ribosomal subunit protein bL25 (199 aa).

It belongs to the bacterial ribosomal protein bL25 family. CTC subfamily. Part of the 50S ribosomal subunit; part of the 5S rRNA/L5/L18/L25 subcomplex. Contacts the 5S rRNA. Binds to the 5S rRNA independently of L5 and L18.

Functionally, this is one of the proteins that binds to the 5S RNA in the ribosome where it forms part of the central protuberance. This chain is Large ribosomal subunit protein bL25, found in Herpetosiphon aurantiacus (strain ATCC 23779 / DSM 785 / 114-95).